Consider the following 217-residue polypeptide: Probable transaldolase (217 aa).

The active-site Schiff-base intermediate with substrate is Lys-83.

Belongs to the transaldolase family. Type 3B subfamily.

The protein resides in the cytoplasm. The catalysed reaction is D-sedoheptulose 7-phosphate + D-glyceraldehyde 3-phosphate = D-erythrose 4-phosphate + beta-D-fructose 6-phosphate. The protein operates within carbohydrate degradation; pentose phosphate pathway; D-glyceraldehyde 3-phosphate and beta-D-fructose 6-phosphate from D-ribose 5-phosphate and D-xylulose 5-phosphate (non-oxidative stage): step 2/3. Functionally, transaldolase is important for the balance of metabolites in the pentose-phosphate pathway. The polypeptide is Probable transaldolase (Bartonella quintana (strain Toulouse) (Rochalimaea quintana)).